A 273-amino-acid chain; its full sequence is Nicotinamide N-methyltransferase (273 aa).

S-adenosyl-L-methionine is bound by residues tyrosine 35, tyrosine 40, glycine 74 to alanine 75, tyrosine 80, aspartate 96, asparagine 101, and asparagine 152 to valine 153.

This sequence belongs to the class I-like SAM-binding methyltransferase superfamily. NNMT/PNMT/TEMT family.

The enzyme catalyses nicotinamide + S-adenosyl-L-methionine = 1-methylnicotinamide + S-adenosyl-L-homocysteine. In terms of biological role, catalyzes the N-methylation of nicotinamide and other pyridines to form pyridinium ions. Involved in regulation of lifespan extension downstream of the sirtuin sir-2.1, probably through its role in nicotinic acid metabolism. The sequence is that of Nicotinamide N-methyltransferase from Caenorhabditis elegans.